The primary structure comprises 325 residues: MKQEYIPLDEFPNKSNEGMLNDEGTSSSGLSTRTRSLELFDNMEESGSFPKVERKIQSLLDELAEVLFQSKQPNDLTRIRKAIAEQLQLWCQACQENADLYRSQQRKLKSRWDSQTDILSQIESTKASLAEVHKAEEISNLKTSITHLDEEIQILQEKLAIVTNQRNTLVKRLQTYDNLEKKKALSMEDRLLTLQEQYDAHANVSSLEKRMEVLKKREDLLRLMVGQALPGMQFFQRLIHQIQAVETKLISILGPTSLSEAALPPLTDVQRTSVLSLLTSTLHSLESARQIADSNTWKPIIVCLELEIVYFENMLTAITSTPVSS.

The segment at 1 to 32 is disordered; the sequence is MKQEYIPLDEFPNKSNEGMLNDEGTSSSGLST. Residues 23–32 show a composition bias toward low complexity; that stretch reads EGTSSSGLST. A coiled-coil region spans residues 135–223; sequence AEEISNLKTS…LKKREDLLRL (89 aa).

The protein resides in the cytoplasm. It is found in the cytoskeleton. The protein localises to the microtubule organizing center. Its subcellular location is the spindle pole body. This is an uncharacterized protein from Schizosaccharomyces pombe (strain 972 / ATCC 24843) (Fission yeast).